A 495-amino-acid polypeptide reads, in one-letter code: 3-octaprenyl-4-hydroxybenzoate carboxy-lyase (495 aa).

N172 is a Mn(2+) binding site. Residues 175 to 177 (IYR), 189 to 191 (RWL), and 194 to 195 (RG) contribute to the prenylated FMN site. E238 is a Mn(2+) binding site. The Proton donor role is filled by D287.

Belongs to the UbiD family. As to quaternary structure, homohexamer. Prenylated FMN is required as a cofactor. The cofactor is Mn(2+).

It is found in the cell membrane. The catalysed reaction is a 4-hydroxy-3-(all-trans-polyprenyl)benzoate + H(+) = a 2-(all-trans-polyprenyl)phenol + CO2. The protein operates within cofactor biosynthesis; ubiquinone biosynthesis. Catalyzes the decarboxylation of 3-octaprenyl-4-hydroxy benzoate to 2-octaprenylphenol, an intermediate step in ubiquinone biosynthesis. This chain is 3-octaprenyl-4-hydroxybenzoate carboxy-lyase, found in Edwardsiella ictaluri (strain 93-146).